A 71-amino-acid polypeptide reads, in one-letter code: Translation initiation factor IF-1 (71 aa).

The region spanning 1-71 (MSKDDLIQFT…LTKGRVIHRH (71 aa)) is the S1-like domain.

The protein belongs to the IF-1 family. Component of the 30S ribosomal translation pre-initiation complex which assembles on the 30S ribosome in the order IF-2 and IF-3, IF-1 and N-formylmethionyl-tRNA(fMet); mRNA recruitment can occur at any time during PIC assembly.

It is found in the cytoplasm. Its function is as follows. One of the essential components for the initiation of protein synthesis. Stabilizes the binding of IF-2 and IF-3 on the 30S subunit to which N-formylmethionyl-tRNA(fMet) subsequently binds. Helps modulate mRNA selection, yielding the 30S pre-initiation complex (PIC). Upon addition of the 50S ribosomal subunit IF-1, IF-2 and IF-3 are released leaving the mature 70S translation initiation complex. The sequence is that of Translation initiation factor IF-1 from Rickettsia canadensis (strain McKiel).